A 301-amino-acid polypeptide reads, in one-letter code: Cuticle collagen 1 (301 aa).

Positions 1–37 (METDGRLKAYKFVAYAAVGFSIAAVASVLLTLPMVYS) are cleaved as a signal peptide. The furin-like endopeptidase recognition region stretch occupies residues 79-82 (RTTR). Triple-helical region regions lie at residues 105–134 (GPPG…PGKP), 153–179 (GPPG…PGTD), 183–209 (GSPG…PGTP), and 218–283 (GAPG…KGIC). Residues 109–284 (PAGAPGKPGK…GTPGEKGICP (176 aa)) are disordered. 2 stretches are compositionally biased toward pro residues: residues 131–164 (PGKP…PGAP) and 184–193 (SPGPRGPPGP). The segment covering 194–210 (AGEAGAPGPAGEPGTPA) has biased composition (low complexity). Positions 226 to 258 (SGPPGPPGPPGAPGNDGPPGPPGPKGAPGPDGP) are enriched in pro residues.

It belongs to the cuticular collagen family. In terms of assembly, collagen polypeptide chains are complexed within the cuticle by disulfide bonds and other types of covalent cross-links.

The protein resides in the secreted. The protein localises to the extracellular space. Its function is as follows. Secreted collagen that forms part of the nematode cuticle, which functions as an exoskeleton and a barrier to protect the worm from its environment. Secretion and subsequent incorporation into the cuticle is likely mediated by bli-4, which probably cleaves at the N-terminal consensus furin cleavage site. This Caenorhabditis elegans protein is Cuticle collagen 1 (sqt-3).